The following is a 281-amino-acid chain: Pantothenate synthetase (281 aa).

Met-30–His-37 is an ATP binding site. The active-site Proton donor is His-37. Gln-61 lines the (R)-pantoate pocket. Gln-61 serves as a coordination point for beta-alanine. Gly-147–Asp-150 is an ATP binding site. Gln-153 contacts (R)-pantoate. ATP-binding positions include Ile-176 and Lys-184–Arg-187.

Belongs to the pantothenate synthetase family. As to quaternary structure, homodimer.

The protein localises to the cytoplasm. It catalyses the reaction (R)-pantoate + beta-alanine + ATP = (R)-pantothenate + AMP + diphosphate + H(+). The protein operates within cofactor biosynthesis; (R)-pantothenate biosynthesis; (R)-pantothenate from (R)-pantoate and beta-alanine: step 1/1. Catalyzes the condensation of pantoate with beta-alanine in an ATP-dependent reaction via a pantoyl-adenylate intermediate. The sequence is that of Pantothenate synthetase from Clostridium acetobutylicum (strain ATCC 824 / DSM 792 / JCM 1419 / IAM 19013 / LMG 5710 / NBRC 13948 / NRRL B-527 / VKM B-1787 / 2291 / W).